The following is a 2025-amino-acid chain: E3 ubiquitin-protein ligase TRIP12 (2025 aa).

Positions 1 to 10 are enriched in polar residues; that stretch reads MSNRPNNNPG. Residues 1 to 404 are disordered; the sequence is MSNRPNNNPG…SGESESDDSE (404 aa). N-acetylserine is present on S2. Position 12 is a phosphoserine (S12). The segment covering 18 to 27 has biased composition (polar residues); sequence RNTAGAQPQD. Basic and acidic residues predominate over residues 48–70; sequence DPDRANTSERQKTGQVPKKDNSR. Residues S77, S85, and S100 each carry the phosphoserine modification. Composition is skewed to polar residues over residues 78 to 88, 99 to 108, and 119 to 132; these read PDYNRTNSPSS, ESLSETNKPP, and EQQLKSAQLPSTSK. Low complexity-rich tracts occupy residues 154–166 and 175–216; these read SSCVKSGSGSEST and PTKL…SSTV. K181 is modified (N6-acetyllysine). Positions 280-290 are enriched in polar residues; the sequence is PGSSKSETSKP. 2 positions are modified to phosphoserine: S310 and S312. A compositionally biased stretch (polar residues) spans 326–338; sequence QKTTGSCASTSRR. Residues 346–358 are compositionally biased toward basic and acidic residues; the sequence is GAAEARRQEKMAD. Over residues 362 to 371 the composition is skewed to polar residues; sequence NQETVNSSAA. Residues 379–397 show a composition bias toward low complexity; the sequence is GAAASSSVAGAVGMTTSGE. A WWE domain is found at 755 to 869; the sequence is MLKKGNAQNT…DPELAKSFIK (115 aa). The tract at residues 970–1077 is disordered; that stretch reads ESLLTSPPKA…QSPKSSFLAS (108 aa). S975 carries the post-translational modification Phosphoserine. Residues 983–1006 are compositionally biased toward low complexity; it reads GSGSLGSTTPASSGTATAATNASA. A phosphoserine mark is found at S1024 and S1030. Residues 1034–1047 are compositionally biased toward basic residues; it reads KRKRLPKRGPRRPK. Phosphoserine is present on S1049. A compositionally biased stretch (basic and acidic residues) spans 1050 to 1059; that stretch reads PPRDDDKVDN. Low complexity predominate over residues 1062 to 1073; sequence KSPTTTQSPKSS. Phosphoserine occurs at positions 1063, 1350, 1355, 1362, and 1409. T1410 is subject to Phosphothreonine. 2 disordered regions span residues 1440 to 1466 and 1601 to 1620; these read SSKDCVGGKRGRAQTAPTKTSPRNAKK and TNPEINQSDSQDSRVAPRLD. N6-acetyllysine is present on K1458. Residue S1460 is modified to Phosphoserine. Residues 1529–1603 are K-box; sequence EIIPTSEFIN…AMQRLLDTNP (75 aa). An HECT domain is found at 1918-2025; the sequence is PDHGYTHDSR…REGQQSFHLS (108 aa). C1992 serves as the catalytic Glycyl thioester intermediate.

It belongs to the UPL family. K-HECT subfamily. Interacts with MYC; leading to disrupt interaction with isoform p19ARF/ARF of CDKN2A. Interacts with TRADD; leading to disrupt interaction with isoform p19ARF/ARF of CDKN2A. Interacts with SMARCC1; leading to disrupt interaction with SMARCE1.

Its subcellular location is the nucleus. It localises to the nucleoplasm. It catalyses the reaction S-ubiquitinyl-[E2 ubiquitin-conjugating enzyme]-L-cysteine + [acceptor protein]-L-lysine = [E2 ubiquitin-conjugating enzyme]-L-cysteine + N(6)-ubiquitinyl-[acceptor protein]-L-lysine.. It participates in protein modification; protein ubiquitination. E3 ubiquitin-protein ligase involved in ubiquitin fusion degradation (UFD) pathway and regulation of DNA repair. Part of the ubiquitin fusion degradation (UFD) pathway, a process that mediates ubiquitination of protein at their N-terminus, regardless of the presence of lysine residues in target proteins. Acts as a key regulator of DNA damage response by acting as a suppressor of RNF168, an E3 ubiquitin-protein ligase that promotes accumulation of 'Lys-63'-linked histone H2A and H2AX at DNA damage sites, thereby acting as a guard against excessive spreading of ubiquitinated chromatin at damaged chromosomes. In normal cells, mediates ubiquitination and degradation of isoform p19ARF/ARF of CDKN2A, a lysine-less tumor suppressor required for p53/TP53 activation under oncogenic stress. In cancer cells, however, isoform p19ARF/ARF and TRIP12 are located in different cell compartments, preventing isoform p19ARF/ARF ubiquitination and degradation. Does not mediate ubiquitination of isoform p16-INK4a of CDKN2A. Also catalyzes ubiquitination of NAE1 and SMARCE1, leading to their degradation. Ubiquitination and degradation of target proteins is regulated by interaction with proteins such as MYC, TRADD or SMARCC1, which disrupt the interaction between TRIP12 and target proteins. Mediates ubiquitination of ASXL1: following binding to N(6)-methyladenosine methylated DNA, ASXL1 is ubiquitinated by TRIP12, leading to its degradation and subsequent inactivation of the PR-DUB complex. This is E3 ubiquitin-protein ligase TRIP12 (Trip12) from Rattus norvegicus (Rat).